Here is a 530-residue protein sequence, read N- to C-terminus: Pre-mRNA-splicing factor PRP9 (530 aa).

A Matrin-type 1 zinc finger spans residues 280 to 310 (IYCPFCSRWFKTSSVFESHLVGKIHKKNESK). Residues 367 to 388 (DSTEKEGAEQVDGEQRDGQLQE) are disordered. Residues 368 to 388 (STEKEGAEQVDGEQRDGQLQE) show a composition bias toward basic and acidic residues. A Matrin-type 2 zinc finger spans residues 421–452 (YRCEICSNKVYNGRRTFERHFNEERHIYHLRC). The disordered stretch occupies residues 488 to 516 (AVPPKPNPSQLKVPTELELEEEDEEGNVM). The span at 504-513 (LELEEEDEEG) shows a compositional bias: acidic residues.

It belongs to the SF3A3 family. Belongs to the CWC complex (or CEF1-associated complex), a spliceosome sub-complex reminiscent of a late-stage spliceosome composed of the U2, U5 and U6 snRNAs and at least BUD13, BUD31, BRR2, CDC40, CEF1, CLF1, CUS1, CWC2, CWC15, CWC21, CWC22, CWC23, CWC24, CWC25, CWC27, ECM2, HSH155, IST3, ISY1, LEA1, MSL1, NTC20, PRP8, PRP9, PRP11, PRP19, PRP21, PRP22, PRP45, PRP46, SLU7, SMB1, SMD1, SMD2, SMD3, SMX2, SMX3, SNT309, SNU114, SPP2, SYF1, SYF2, RSE1 and YJU2.

The protein resides in the nucleus. MRNA splicing factors, PRP9, PRP11, and PRP21, are necessary for binding of the U2 snRNP to the pre-mRNA in an early step of spliceosome assembly. This is Pre-mRNA-splicing factor PRP9 (PRP9) from Saccharomyces cerevisiae (strain ATCC 204508 / S288c) (Baker's yeast).